The primary structure comprises 84 residues: Large ribosomal subunit protein bL27 (84 aa).

The interval methionine 1–glycine 22 is disordered.

The protein belongs to the bacterial ribosomal protein bL27 family.

This chain is Large ribosomal subunit protein bL27, found in Shewanella pealeana (strain ATCC 700345 / ANG-SQ1).